The chain runs to 263 residues: Putative TATA-binding protein pB263R (263 aa).

This sequence belongs to the asfivirus B263R family.

Its function is as follows. Putative TATA-binding protein. The sequence is that of Putative TATA-binding protein pB263R from Ornithodoros (relapsing fever ticks).